A 79-amino-acid polypeptide reads, in one-letter code: Acyl carrier protein (79 aa).

Positions 2 to 77 (SDIAERVKKI…DAVKFLEKNS (76 aa)) constitute a Carrier domain. The residue at position 37 (serine 37) is an O-(pantetheine 4'-phosphoryl)serine.

This sequence belongs to the acyl carrier protein (ACP) family. In terms of processing, 4'-phosphopantetheine is transferred from CoA to a specific serine of apo-ACP by AcpS. This modification is essential for activity because fatty acids are bound in thioester linkage to the sulfhydryl of the prosthetic group.

The protein resides in the cytoplasm. It participates in lipid metabolism; fatty acid biosynthesis. In terms of biological role, carrier of the growing fatty acid chain in fatty acid biosynthesis. The protein is Acyl carrier protein of Methylobacterium radiotolerans (strain ATCC 27329 / DSM 1819 / JCM 2831 / NBRC 15690 / NCIMB 10815 / 0-1).